The chain runs to 203 residues: MGGSLRVAVLGAPGVGKTAIIRQFLFGDYPERHRPTDSPCLYRPAVLLDGAVYDLSIRDGDVAGPGSSPRSLEEWPDPKDWSLQDTDAFVLVYDICSPDSFDYVKALRQRIAENRPAGAPEAPILVVGNKRDRQRLRFGPRRALATLVRRGWRCGYLECSAKYNWHVLRLFRELLRCALVRTRPAHPTLRLQGALHPARCSLM.

The interval 1–203 (MGGSLRVAVL…ALHPARCSLM (203 aa)) is small GTPase-like. 11 to 18 (GAPGVGKT) is a GTP binding site. The short motif at 33–42 (HRPTDSPCLY) is the Effector region element. GTP is bound by residues 59–62 (DGDV) and 129–132 (NKRD). Residue Cys200 is modified to Cysteine methyl ester. Cys200 carries the S-farnesyl cysteine lipid modification. The propeptide at 201 to 203 (SLM) is removed in mature form.

This sequence belongs to the small GTPase superfamily. Ras family. Isoprenylation is essential for nucleolar localization, and the proliferation-inhibiting activity of RASL10A.

It localises to the cell membrane. The protein resides in the nucleus. Its subcellular location is the nucleolus. The catalysed reaction is GTP + H2O = GDP + phosphate + H(+). Its function is as follows. Potent inhibitor of cellular proliferation. The polypeptide is Ras-like protein family member 10A (Rasl10a) (Mus musculus (Mouse)).